A 72-amino-acid polypeptide reads, in one-letter code: Putative ORF1 protein (72 aa).

The polypeptide is Putative ORF1 protein (ORF1) (Leishmania RNA virus 1 - 1 (isolate Leishmania guyanensis) (LRV-1-1)).